Here is a 227-residue protein sequence, read N- to C-terminus: Large ribosomal subunit protein uL3 (227 aa).

Residues 146–167 form a disordered region; the sequence is RGPMAHGSKFHRHQGSNGACSS.

This sequence belongs to the universal ribosomal protein uL3 family. Part of the 50S ribosomal subunit. Forms a cluster with proteins L14 and L19.

Functionally, one of the primary rRNA binding proteins, it binds directly near the 3'-end of the 23S rRNA, where it nucleates assembly of the 50S subunit. The polypeptide is Large ribosomal subunit protein uL3 (Agathobacter rectalis (strain ATCC 33656 / DSM 3377 / JCM 17463 / KCTC 5835 / VPI 0990) (Eubacterium rectale)).